The sequence spans 217 residues: Small ribosomal subunit protein uS11m (217 aa).

A mitochondrion-targeting transit peptide spans 1 to 59 (MLLQPVWKGCRWTQFVRPIRRWNSTGTNRGVPFSFKDISNQEDITNISYPSSSDSVLTK).

It belongs to the universal ribosomal protein uS11 family. In terms of assembly, component of the mitochondrial small ribosomal subunit (mt-SSU). Mature yeast 74S mitochondrial ribosomes consist of a small (37S) and a large (54S) subunit. The 37S small subunit contains a 15S ribosomal RNA (15S mt-rRNA) and 34 different proteins. The 54S large subunit contains a 21S rRNA (21S mt-rRNA) and 46 different proteins.

It localises to the mitochondrion. Its function is as follows. Component of the mitochondrial ribosome (mitoribosome), a dedicated translation machinery responsible for the synthesis of mitochondrial genome-encoded proteins, including at least some of the essential transmembrane subunits of the mitochondrial respiratory chain. The mitoribosomes are attached to the mitochondrial inner membrane and translation products are cotranslationally integrated into the membrane. The protein is Small ribosomal subunit protein uS11m (MRPS18) of Saccharomyces cerevisiae (strain ATCC 204508 / S288c) (Baker's yeast).